A 423-amino-acid polypeptide reads, in one-letter code: tRNA(Ile2) 2-agmatinylcytidine synthetase TiaS (423 aa).

The OB DNA-binding region spans Val273–Leu347.

The protein belongs to the TiaS family.

It localises to the cytoplasm. The enzyme catalyses cytidine(34) in tRNA(Ile2) + agmatine + ATP + H2O = 2-agmatinylcytidine(34) in tRNA(Ile2) + AMP + 2 phosphate + 2 H(+). ATP-dependent agmatine transferase that catalyzes the formation of 2-agmatinylcytidine (agm2C) at the wobble position (C34) of tRNA(Ile2), converting the codon specificity from AUG to AUA. In Methanocaldococcus jannaschii (strain ATCC 43067 / DSM 2661 / JAL-1 / JCM 10045 / NBRC 100440) (Methanococcus jannaschii), this protein is tRNA(Ile2) 2-agmatinylcytidine synthetase TiaS.